The sequence spans 140 residues: Mite allergen Der p 21.0101 (140 aa).

An N-terminal signal peptide occupies residues 1-19 (MKFIITLFAAIVMAAAVSG). 2 immunodominant conformational IgE-binding epitope regions span residues 20–53 (FIVG…EKGL) and 108–140 (YNYE…DEYY).

Belongs to the mite group 5 allergen family. As to quaternary structure, monomer. Homodimer. As to expression, expressed in the epithelium, lumen and microvilli of the midgut, and in feces.

The protein localises to the cytoplasm. It is found in the endoplasmic reticulum. It localises to the vesicle. Its subcellular location is the secreted. This Dermatophagoides pteronyssinus (European house dust mite) protein is Mite allergen Der p 21.0101.